The primary structure comprises 129 residues: Large ribosomal subunit protein bL17 (129 aa).

This sequence belongs to the bacterial ribosomal protein bL17 family. In terms of assembly, part of the 50S ribosomal subunit. Contacts protein L32.

The protein is Large ribosomal subunit protein bL17 of Yersinia enterocolitica serotype O:8 / biotype 1B (strain NCTC 13174 / 8081).